Consider the following 561-residue polypeptide: uncharacterized protein (561 aa).

Residues 1–11 (MSQVSLPSQLK) show a composition bias toward polar residues. Disordered stretches follow at residues 1-22 (MSQV…SRCR) and 522-561 (CSLP…IMLP). The segment covering 541-561 (QQPQQAQAEQAQQPQQQIMLP) has biased composition (low complexity).

It to Synechocystis PCC 6803 sll0335 and to M.tuberculosis Rv2567.

This is an uncharacterized protein from Mycobacterium leprae (strain TN).